Consider the following 602-residue polypeptide: Elongation factor 4 (602 aa).

Residues 6 to 188 form the tr-type G domain; that stretch reads DRIRNFCIIA…RIVTRIPPPG (183 aa). GTP contacts are provided by residues 18 to 23 and 135 to 138; these read DHGKST and NKID.

This sequence belongs to the TRAFAC class translation factor GTPase superfamily. Classic translation factor GTPase family. LepA subfamily.

It is found in the cell membrane. It carries out the reaction GTP + H2O = GDP + phosphate + H(+). Required for accurate and efficient protein synthesis under certain stress conditions. May act as a fidelity factor of the translation reaction, by catalyzing a one-codon backward translocation of tRNAs on improperly translocated ribosomes. Back-translocation proceeds from a post-translocation (POST) complex to a pre-translocation (PRE) complex, thus giving elongation factor G a second chance to translocate the tRNAs correctly. Binds to ribosomes in a GTP-dependent manner. In Pelotomaculum thermopropionicum (strain DSM 13744 / JCM 10971 / SI), this protein is Elongation factor 4.